The following is a 125-amino-acid chain: Late histone H2A.1 (125 aa).

Residues 1–18 (MSGRGKGKAKGTKSKTRS) are compositionally biased toward basic residues. The segment at 1–21 (MSGRGKGKAKGTKSKTRSSRA) is disordered. At S2 the chain carries N-acetylserine. At S2 the chain carries Phosphoserine. Q104 bears the N5-methylglutamine mark. K119 participates in a covalent cross-link: Glycyl lysine isopeptide (Lys-Gly) (interchain with G-Cter in ubiquitin).

The protein belongs to the histone H2A family. As to quaternary structure, the nucleosome is a histone octamer containing two molecules each of H2A, H2B, H3 and H4 assembled in one H3-H4 heterotetramer and two H2A-H2B heterodimers. The octamer wraps approximately 147 bp of DNA. In terms of processing, monoubiquitination of Lys-119 gives a specific tag for epigenetic transcriptional repression. Phosphorylation of Ser-2 directly represses transcription.

The protein resides in the nucleus. The protein localises to the chromosome. In terms of biological role, core component of nucleosome. Nucleosomes wrap and compact DNA into chromatin, limiting DNA accessibility to the cellular machineries which require DNA as a template. Histones thereby play a central role in transcription regulation, DNA repair, DNA replication and chromosomal stability. DNA accessibility is regulated via a complex set of post-translational modifications of histones, also called histone code, and nucleosome remodeling. This chain is Late histone H2A.1, found in Psammechinus miliaris (Green sea urchin).